The following is a 1228-amino-acid chain: DNA-directed RNA polymerase subunit beta (1228 aa).

The protein belongs to the RNA polymerase beta chain family. In terms of assembly, the RNAP catalytic core consists of 2 alpha, 1 beta, 1 beta' and 1 omega subunit. When a sigma factor is associated with the core the holoenzyme is formed, which can initiate transcription.

The catalysed reaction is RNA(n) + a ribonucleoside 5'-triphosphate = RNA(n+1) + diphosphate. In terms of biological role, DNA-dependent RNA polymerase catalyzes the transcription of DNA into RNA using the four ribonucleoside triphosphates as substrates. This Leptospira biflexa serovar Patoc (strain Patoc 1 / Ames) protein is DNA-directed RNA polymerase subunit beta.